The following is a 449-amino-acid chain: Phosphoglucosamine mutase (449 aa).

Catalysis depends on S101, which acts as the Phosphoserine intermediate. Mg(2+) contacts are provided by S101, D240, D242, and D244. S101 carries the phosphoserine modification.

Belongs to the phosphohexose mutase family. Mg(2+) serves as cofactor. Post-translationally, activated by phosphorylation.

It catalyses the reaction alpha-D-glucosamine 1-phosphate = D-glucosamine 6-phosphate. In terms of biological role, catalyzes the conversion of glucosamine-6-phosphate to glucosamine-1-phosphate. The polypeptide is Phosphoglucosamine mutase (Streptococcus mutans serotype c (strain ATCC 700610 / UA159)).